Consider the following 480-residue polypeptide: Acetylxylan esterase (480 aa).

The signal sequence occupies residues 1 to 19 (MNRKLFMTGLLMLAMTMQA).

It belongs to the AB hydrolase superfamily.

It catalyses the reaction Deacetylation of xylans and xylo-oligosaccharides.. It functions in the pathway glycan degradation; xylan degradation. Its function is as follows. Involved in degradation of plant cell wall polysaccharides. Is an acetyl esterase with broad substrate specificity, releasing acetic acid from acetylated xylo-oligosaccharides and acetylated xylan as well as xylose-tetraacetate, 4-O-methylumbelliferyl acetate, glucose-pentaacetate, and cephalosporin C. Appears to have greater activity on oligosaccharides than on polymeric substrates. Is also able to release acetic acid from xylo-oligosaccharides with 4-O-methylglucuronic acid side groups proximally located to O-acetyl esters. Preferentially targets xylo-oligosaccharides possessing three or more O-acetyl groups, but following their depletion it is active on the less acetylated portion of the substrate. In Xylanibacter ruminicola (strain ATCC 19189 / DSM 19721 / CIP 105475 / JCM 8958 / 23) (Prevotella ruminicola), this protein is Acetylxylan esterase.